Consider the following 265-residue polypeptide: NAD kinase 1 (265 aa).

Asp-45 functions as the Proton acceptor in the catalytic mechanism. NAD(+) is bound by residues 45 to 46 (DG), 122 to 123 (NE), Arg-148, Asp-150, and Ala-185.

This sequence belongs to the NAD kinase family. The cofactor is a divalent metal cation.

It localises to the cytoplasm. It catalyses the reaction NAD(+) + ATP = ADP + NADP(+) + H(+). Its function is as follows. Involved in the regulation of the intracellular balance of NAD and NADP, and is a key enzyme in the biosynthesis of NADP. Catalyzes specifically the phosphorylation on 2'-hydroxyl of the adenosine moiety of NAD to yield NADP. This is NAD kinase 1 from Bacillus cereus (strain ATCC 10987 / NRS 248).